The chain runs to 928 residues: MORC family CW-type zinc finger protein 4 (928 aa).

Residues 417–469 (RIPDQTWVQCDECLKWRRLPGMVDPSTLPARWFCYYNPHPKFKRCSVPEEQER) form a CW-type zinc finger. Residues C426, C429, C450, and C461 each contribute to the Zn(2+) site. Disordered stretches follow at residues 474–510 (LHRSKAKQQVEAAEKKQKPMESDKYQVFSNPPKTPPL), 527–546 (NSPSLLPSVREESRSPPRLK), 599–649 (AYPE…DQDQ), and 718–766 (RAES…LKRT). The span at 485-497 (AAEKKQKPMESDK) shows a compositional bias: basic and acidic residues. 3 stretches are compositionally biased toward basic and acidic residues: residues 626-636 (ESNKHTEENRE), 739-748 (KGKDCQDSRS), and 756-766 (TPKESEELKRT). Residues 758-867 (KESEELKRTT…LEVLQKAQVS (110 aa)) adopt a coiled-coil conformation.

It is found in the nucleus. In terms of biological role, histone methylation reader which binds to non-methylated (H3K4me0), monomethylated (H3K4me1), dimethylated (H3K4me2) and trimethylated (H3K4me3) 'Lys-4' on histone H3. The order of binding preference is H3K4me3 &gt; H3K4me2 &gt; H3K4me1 &gt; H3K4me0. The protein is MORC family CW-type zinc finger protein 4 (Morc4) of Mus musculus (Mouse).